The following is a 337-amino-acid chain: Dimethyladenosine transferase 1, mitochondrial (337 aa).

The N-terminal 84 residues, Met1–Arg84, are a transit peptide targeting the mitochondrion. S-adenosyl-L-methionine-binding positions include Gln38–Leu41, Asn39, Leu41, Gly67, Glu89, Asp118, and Asn140.

The protein belongs to the class I-like SAM-binding methyltransferase superfamily. rRNA adenine N(6)-methyltransferase family. KsgA subfamily.

The protein localises to the mitochondrion. In terms of biological role, probable S-adenosyl-L-methionine-dependent methyltransferase which specifically dimethylates mitochondrial 12S rRNA at the conserved stem loop. The protein is Dimethyladenosine transferase 1, mitochondrial (mtTFB1) of Drosophila pseudoobscura pseudoobscura (Fruit fly).